A 605-amino-acid polypeptide reads, in one-letter code: Exonuclease V, mitochondrial (605 aa).

Residues 1–17 constitute a mitochondrion transit peptide; it reads MSLNFLKRYLSRSTRNF. Positions 140, 563, 566, and 572 each coordinate [4Fe-4S] cluster.

This sequence belongs to the EXO5 family. In terms of assembly, monomer. Requires Mg(2+) as cofactor. [4Fe-4S] cluster is required as a cofactor.

The protein localises to the mitochondrion. In terms of biological role, single strand DNA specific 5' exonuclease involved in mitochondrial DNA replication and recombination. Releases dinucleotides as main products of catalysis. Has the capacity to slide across 5'double-stranded DNA or 5'RNA sequences and resumes cutting two nucleotides downstream of the double-stranded-to-single-stranded junction or RNA-to-DNA junction, respectively. The chain is Exonuclease V, mitochondrial (EXO5) from Candida tropicalis (strain ATCC MYA-3404 / T1) (Yeast).